Reading from the N-terminus, the 75-residue chain is U6-lycotoxin-Ls1g (75 aa).

Positions 1–21 (MKLLLFTALVLVVISLIEVEA) are cleaved as a signal peptide. A propeptide spanning residues 22 to 25 (ENER) is cleaved from the precursor.

It belongs to the neurotoxin 19 (CSTX) family. 06 (U6-Lctx) subfamily. In terms of processing, contains 4 disulfide bonds. As to expression, expressed by the venom gland.

It localises to the secreted. This chain is U6-lycotoxin-Ls1g, found in Lycosa singoriensis (Wolf spider).